The following is a 258-amino-acid chain: Hydroxyacylglutathione hydrolase (258 aa).

Residues His-56, His-58, Asp-60, His-61, His-112, Asp-132, and His-170 each coordinate Zn(2+).

This sequence belongs to the metallo-beta-lactamase superfamily. Glyoxalase II family. In terms of assembly, monomer. It depends on Zn(2+) as a cofactor.

The catalysed reaction is an S-(2-hydroxyacyl)glutathione + H2O = a 2-hydroxy carboxylate + glutathione + H(+). The protein operates within secondary metabolite metabolism; methylglyoxal degradation; (R)-lactate from methylglyoxal: step 2/2. In terms of biological role, thiolesterase that catalyzes the hydrolysis of S-D-lactoyl-glutathione to form glutathione and D-lactic acid. The polypeptide is Hydroxyacylglutathione hydrolase (Pseudomonas paraeruginosa (strain DSM 24068 / PA7) (Pseudomonas aeruginosa (strain PA7))).